Consider the following 212-residue polypeptide: MQLFHLCLIISCSCPTVQASKLCLGWLWGMDIDPYKEFGASVELLSFLPSDFFPSIRDLLDTASALYREALESPEHCSPHHTALRQAILCWGELMNLATWVGSNLEDPASRELVVSYVNVNMGLKIRQLLWFHISCLTFGRETVLEYLVSFGVWIRTPPAYRPPNAPILSTLPETTVVRRRGRSPRRRTPSPRRRRSQSPRRRRSQSRESQC.

A signal peptide spans 1 to 19 (MQLFHLCLIISCSCPTVQA). The HBEAG stretch occupies residues 25 to 27 (GWL). The segment at 165-212 (NAPILSTLPETTVVRRRGRSPRRRTPSPRRRRSQSPRRRRSQSRESQC) is disordered. Positions 178–205 (VRRRGRSPRRRTPSPRRRRSQSPRRRRS) are enriched in basic residues. The 1; half-length repeat unit spans residues 184–190 (SPRRRTP). The interval 184–206 (SPRRRTPSPRRRRSQSPRRRRSQ) is 3 X 8 AA repeats of S-P-R-R-R-R-S-Q. Positions 184–212 (SPRRRTPSPRRRRSQSPRRRRSQSRESQC) are excised as a propeptide. 2 tandem repeats follow at residues 191-198 (SPRRRRSQ) and 199-206 (SPRRRRSQ).

The protein belongs to the orthohepadnavirus precore antigen family. As to quaternary structure, homodimerizes. Phosphorylated. Post-translationally, cleaved by host furin.

The protein localises to the secreted. It localises to the host nucleus. Its function is as follows. May regulate immune response to the intracellular capsid in acting as a T-cell tolerogen, by having an immunoregulatory effect which prevents destruction of infected cells by cytotoxic T-cells. This immune regulation may predispose to chronicity during perinatal infections and prevent severe liver injury during adult infections. The chain is External core antigen from Hepatitis B virus genotype B2 (isolate Indonesia/pIDW420/1988) (HBV-B).